The primary structure comprises 69 residues: uncharacterized protein (69 aa).

This is an uncharacterized protein from Acheta domesticus (House cricket).